Reading from the N-terminus, the 76-residue chain is Protein MATERNALLY EXPRESSED GENE 4 (76 aa).

The N-terminal stretch at 1-27 is a signal peptide; sequence MEYRKRVDALVFFSLLLLGYFAAHAHG. The cysteines at positions 53 and 75 are disulfide-linked.

The protein belongs to the MEG family. In terms of tissue distribution, expressed exclusively in endosperm.

This is Protein MATERNALLY EXPRESSED GENE 4 (MEG4) from Zea mays (Maize).